Reading from the N-terminus, the 504-residue chain is MSFVVTVPEAVAAAAGDLAAIGSTLREATAAAAGPTTGLAAAAADDVSIAVSQLFGRYGQEFQTVSNQLAAFHTEFVRTLNRGAAAYLNTESANGGQLFGQIEAGQRAVSAAAAAAPGGAYGQLVANTATNLESLYGAWSANPFPFLRQIIANQQVYWQQIAAALANAVQNFPALVANLPAAIDAAVQQFLAFNAAYYIQQIISSQIGFAQLFATTVGQGVTSVIAGWPNLAAELQLAFQQLLVGDYNAAVANLGKAMTNLLVTGFDTSDVTIGTMGTTISVTAKPKLLGPLGDLFTIMTIPAQEAQYFTNLMPPSILRDMSQNFTNVLTTLSNPNIQAVASFDIATTAGTLSTFFGVPLVLTYATLGAPFASLNAIATSAETIEQALLAGNYLGAVGALIDAPAHALDGFLNSATVLDTPILVPTGLPSPLPPTVGITLHLPFDGILVPPHPVTATISFPGAPVPIPGFPTTVTVFGTPFMGMAPLLINYIPQQLALAIKPAA.

One can recognise a PE domain in the interval 4–94 (VVTVPEAVAA…AAYLNTESAN (91 aa)).

It belongs to the mycobacterial PE family. PGRS subfamily. As to quaternary structure, interacts with host Toll-like receptor 2 (TLR2).

The protein localises to the secreted. It is found in the cell wall. Its function is as follows. Supports mycobacterial virulence via inhibition of phagosome maturation and host inducible nitric oxide synthase (iNOS) expression. May promote the survival within macrophages by disturbing the cytokines profiles and blocking the endoplasmic reticulum (ER) stress-mediated apoptosis. May also affect bacterial cell wall composition. Functionally, expression in Mycobacterium smegmatis, a nonpathogenic species naturally deficient in PE_PGRS genes, results in enhanced resistance to various in vitro stresses. It also leads to phagosome maturation arrest and increased survival in macrophages. In Mycobacterium tuberculosis (strain ATCC 25618 / H37Rv), this protein is PE-PGRS family protein PE_PGRS62.